We begin with the raw amino-acid sequence, 358 residues long: MADRGGARRPRGDQEPLGPRLRAPRSARETRQSESRAERGLPPSQRSSVRSAASGHDRSTRGAASGACKPRVKKKVRPRSSQSEKVAHSKELTRSKKLTRSKKVTGTQEATQVEEVTTIEEATQTEEITVAEEVTQTENMAQTEEMVQTEEMEPPTLSVVVTHSNERYDLLVTPQQGNSEPIVQDLAQLVEEATGVPLPFQKLIFKGKSLKEMETPLSALGMQNGCRVMLIGEKSNPEEEAELKKLKDLEVSVEKTANHLEELNKELSDIQQGFLAKELQAEALCRLDRKIKATIEQFMKILEEIDTMVLPENFKDSRLKRKNLVKKVQVFLAECDTVEQYICQETERLQSTNLALPE.

Composition is skewed to basic and acidic residues over residues 1 to 14 (MADRGGARRPRGDQ), 26 to 39 (SARETRQSESRAER), and 85 to 94 (KVAHSKELTR). The disordered stretch occupies residues 1 to 113 (MADRGGARRP…VTGTQEATQV (113 aa)). 7 consecutive repeat copies span residues 102–111 (KKVTGTQEAT), 114–119 (EEVTTI), 120–125 (EEATQT), 126–131 (EEITVA), 132–137 (EEVTQT), 144–149 (EEMVQT), and 150–155 (EEMEPP). The 7 X 6 AA tandem repeat of E-E-X(4) stretch occupies residues 114–212 (EEVTTIEEAT…LIFKGKSLKE (99 aa)). Positions 157 to 237 (LSVVVTHSNE…VMLIGEKSNP (81 aa)) constitute a Ubiquitin-like domain. The tract at residues 185–232 (DLAQLVEEATGVPLPFQKLIFKGKSLKEMETPLSALGMQNGCRVMLIG) is interaction with HSPA8. The tract at residues 229–358 (MLIGEKSNPE…LQSTNLALPE (130 aa)) is interaction with PPP1R15A. One can recognise a BAG domain in the interval 259-339 (HLEELNKELS…VFLAECDTVE (81 aa)).

In terms of assembly, homodimer. Forms a heteromeric complex with HSP70/HSC70. Binds to the ATPase domain of HSP/HSC70 chaperones. Interacts with NR3C1. Interacts with the N-terminal region of MAPRE2. Interacts with PPP1R15A. Interacts with BCL2 in an ATP-dependent manner. Interacts with SIAH1, SIAH2, HSPA8 (via NBD), HSPA1A (via NBD) and HSPA1B (via NBD). Interacts with ESR1; the interaction is promoted in the absence of estradiol (17-beta-estradiol/E2). Ubiquitinated; mediated by SIAH1 or SIAH2 and leading to its subsequent proteasomal degradation. In terms of tissue distribution, expressed in the CA1 region of the hippocampus (at protein level). Expressed in the uterus (at protein level).

It is found in the nucleus. It localises to the cytoplasm. In terms of biological role, co-chaperone for HSP70 and HSC70 chaperone proteins. Acts as a nucleotide-exchange factor (NEF) promoting the release of ADP from the HSP70 and HSC70 proteins thereby triggering client/substrate protein release. Nucleotide release is mediated via its binding to the nucleotide-binding domain (NBD) of HSPA8/HSC70 where as the substrate release is mediated via its binding to the substrate-binding domain (SBD) of HSPA8/HSC70. Inhibits the pro-apoptotic function of PPP1R15A, and has anti-apoptotic activity. Markedly increases the anti-cell death function of BCL2 induced by various stimuli. Involved in the STUB1-mediated proteasomal degradation of ESR1 in response to age-related circulating estradiol (17-beta-estradiol/E2) decline, thereby promotes neuronal apoptosis in response to ischemic reperfusion injury. In Rattus norvegicus (Rat), this protein is BAG family molecular chaperone regulator 1 (Bag1).